The following is a 308-amino-acid chain: Acetyl-coenzyme A carboxylase carboxyl transferase subunit beta 1 (308 aa).

The CoA carboxyltransferase N-terminal domain maps to 25–294 (VWTKCTSCEQ…PMVVSVNESP (270 aa)). The Zn(2+) site is built by Cys29, Cys32, Cys48, and Cys51. The C4-type zinc-finger motif lies at 29–51 (CTSCEQVLYHAELERNLEVCPKC). Positions 289–308 (SVNESPNEEPYSVPEADEKG) are disordered.

The protein belongs to the AccD/PCCB family. As to quaternary structure, acetyl-CoA carboxylase is a heterohexamer composed of biotin carboxyl carrier protein (AccB), biotin carboxylase (AccC) and two subunits each of ACCase subunit alpha (AccA) and ACCase subunit beta (AccD). It depends on Zn(2+) as a cofactor.

It is found in the cytoplasm. It carries out the reaction N(6)-carboxybiotinyl-L-lysyl-[protein] + acetyl-CoA = N(6)-biotinyl-L-lysyl-[protein] + malonyl-CoA. It functions in the pathway lipid metabolism; malonyl-CoA biosynthesis; malonyl-CoA from acetyl-CoA: step 1/1. Its function is as follows. Component of the acetyl coenzyme A carboxylase (ACC) complex. Biotin carboxylase (BC) catalyzes the carboxylation of biotin on its carrier protein (BCCP) and then the CO(2) group is transferred by the transcarboxylase to acetyl-CoA to form malonyl-CoA. The protein is Acetyl-coenzyme A carboxylase carboxyl transferase subunit beta 1 of Vibrio campbellii (strain ATCC BAA-1116).